Here is a 316-residue protein sequence, read N- to C-terminus: Ornithine carbamoyltransferase (316 aa).

Carbamoyl phosphate-binding positions include 59–62 (STRT), glutamine 86, arginine 110, and 137–140 (HPCQ). L-ornithine is bound by residues asparagine 168, aspartate 232, and 236–237 (SM). Residues 273–274 (CL) and arginine 301 each bind carbamoyl phosphate.

Belongs to the aspartate/ornithine carbamoyltransferase superfamily. OTCase family.

It localises to the cytoplasm. It catalyses the reaction carbamoyl phosphate + L-ornithine = L-citrulline + phosphate + H(+). It participates in amino-acid biosynthesis; L-arginine biosynthesis; L-arginine from L-ornithine and carbamoyl phosphate: step 1/3. In terms of biological role, reversibly catalyzes the transfer of the carbamoyl group from carbamoyl phosphate (CP) to the N(epsilon) atom of ornithine (ORN) to produce L-citrulline. This Listeria innocua serovar 6a (strain ATCC BAA-680 / CLIP 11262) protein is Ornithine carbamoyltransferase.